The sequence spans 149 residues: SsrA-binding protein (149 aa).

Positions 121–149 (GKKQHDKRAAEKDREWQREKQRLVRSAQH) are disordered. Residues 127-142 (KRAAEKDREWQREKQR) show a composition bias toward basic and acidic residues.

The protein belongs to the SmpB family.

Its subcellular location is the cytoplasm. Its function is as follows. Required for rescue of stalled ribosomes mediated by trans-translation. Binds to transfer-messenger RNA (tmRNA), required for stable association of tmRNA with ribosomes. tmRNA and SmpB together mimic tRNA shape, replacing the anticodon stem-loop with SmpB. tmRNA is encoded by the ssrA gene; the 2 termini fold to resemble tRNA(Ala) and it encodes a 'tag peptide', a short internal open reading frame. During trans-translation Ala-aminoacylated tmRNA acts like a tRNA, entering the A-site of stalled ribosomes, displacing the stalled mRNA. The ribosome then switches to translate the ORF on the tmRNA; the nascent peptide is terminated with the 'tag peptide' encoded by the tmRNA and targeted for degradation. The ribosome is freed to recommence translation, which seems to be the essential function of trans-translation. This is SsrA-binding protein from Thiobacillus denitrificans (strain ATCC 25259 / T1).